Here is a 664-residue protein sequence, read N- to C-terminus: MSELLLELFSEEIPAFMQKNAEEGYLNIFTKIFEENEIFAKVQVFAGPRRITLHATHLPKITLPKEEEIKGPSIEAPETAINGFCKAHNVSKLELPTKLISNQLYYFFVKKTEEREIKEILPEIIIEAINKYSWAKSMFWGDYKIKWIRPLRNILCIFNGEILPMQFGHLTANNITYGHRLTDNKKLEVTDFEDYRNKLLENHVILERAKREAIIKTGLLELANSHELIIKEDNRLVEEVVGLSEFPIVLLGKIPQKFLELPKEVLISSMRTHQKYFCLFDKTGNFTPYFLFVSNGRFTNAELVIQGNEKVLSARLSDALYFCKQDIAKTLESRLGQLEAVTFHAKLGNLREKIERITDICNYIAPNNKDLITAARLCKSDLVSEMVWEFPDLQGIMGYYYAKHEGLNAEIAAAIKDHYKPQGLSDNVPSGNAALLALADKLDSLVGLMIAGETPTGSGDPYALRRQALGIIRIILENKLELNFNDLINFSINLYKDSSDENKNLIISFFEERAKFYFKNDYDIALINAVLDLNLIDTNFKLDELKEFLIEDAGKQLLNAYKRASNIIGDQKITGLVDASLFSTQPEKELFEVIQKISPEIIDSIADKDYKKALNLLSSLLTPITSFFDNILVNDSDPKIAQNRLSLLQNICELFDKVAKFNRL.

This sequence belongs to the class-II aminoacyl-tRNA synthetase family. As to quaternary structure, tetramer of two alpha and two beta subunits.

The protein localises to the cytoplasm. The catalysed reaction is tRNA(Gly) + glycine + ATP = glycyl-tRNA(Gly) + AMP + diphosphate. In Rickettsia peacockii (strain Rustic), this protein is Glycine--tRNA ligase beta subunit.